The chain runs to 618 residues: Isocitrate dehydrogenase kinase/phosphatase (618 aa).

ATP-binding positions include alanine 332–methionine 338 and lysine 353. Aspartate 388 is a catalytic residue.

This sequence belongs to the AceK family.

It is found in the cytoplasm. The catalysed reaction is L-seryl-[isocitrate dehydrogenase] + ATP = O-phospho-L-seryl-[isocitrate dehydrogenase] + ADP + H(+). Functionally, bifunctional enzyme which can phosphorylate or dephosphorylate isocitrate dehydrogenase (IDH) on a specific serine residue. This is a regulatory mechanism which enables bacteria to bypass the Krebs cycle via the glyoxylate shunt in response to the source of carbon. When bacteria are grown on glucose, IDH is fully active and unphosphorylated, but when grown on acetate or ethanol, the activity of IDH declines drastically concomitant with its phosphorylation. In Methylibium petroleiphilum (strain ATCC BAA-1232 / LMG 22953 / PM1), this protein is Isocitrate dehydrogenase kinase/phosphatase.